A 609-amino-acid chain; its full sequence is Arginine--tRNA ligase (609 aa).

The 'HIGH' region signature appears at 132-142 (ANPTSSLHVGH).

This sequence belongs to the class-I aminoacyl-tRNA synthetase family. As to quaternary structure, monomer.

It is found in the cytoplasm. It carries out the reaction tRNA(Arg) + L-arginine + ATP = L-arginyl-tRNA(Arg) + AMP + diphosphate. The sequence is that of Arginine--tRNA ligase from Psychrobacter arcticus (strain DSM 17307 / VKM B-2377 / 273-4).